A 388-amino-acid polypeptide reads, in one-letter code: Acyl-CoA dehydrogenase fadE12 (388 aa).

It belongs to the acyl-CoA dehydrogenase family. It depends on FAD as a cofactor.

The catalysed reaction is a 2,3-saturated acyl-CoA + A = a 2,3-dehydroacyl-CoA + AH2. The protein is Acyl-CoA dehydrogenase fadE12 (fadE12) of Mycobacterium tuberculosis (strain CDC 1551 / Oshkosh).